The following is a 302-amino-acid chain: uncharacterized protein (302 aa).

An N-terminal signal peptide occupies residues Met1 to Ala28.

This is an uncharacterized protein from Rickettsia prowazekii (strain Madrid E).